Reading from the N-terminus, the 429-residue chain is Serine hydroxymethyltransferase (429 aa).

(6S)-5,6,7,8-tetrahydrofolate contacts are provided by residues Leu126 and 130–132; that span reads GHL. N6-(pyridoxal phosphate)lysine is present on Lys235. (6S)-5,6,7,8-tetrahydrofolate is bound at residue 359-361; sequence SPF.

Belongs to the SHMT family. In terms of assembly, homodimer. Requires pyridoxal 5'-phosphate as cofactor.

Its subcellular location is the cytoplasm. The catalysed reaction is (6R)-5,10-methylene-5,6,7,8-tetrahydrofolate + glycine + H2O = (6S)-5,6,7,8-tetrahydrofolate + L-serine. Its pathway is one-carbon metabolism; tetrahydrofolate interconversion. The protein operates within amino-acid biosynthesis; glycine biosynthesis; glycine from L-serine: step 1/1. In terms of biological role, catalyzes the reversible interconversion of serine and glycine with tetrahydrofolate (THF) serving as the one-carbon carrier. This reaction serves as the major source of one-carbon groups required for the biosynthesis of purines, thymidylate, methionine, and other important biomolecules. Also exhibits THF-independent aldolase activity toward beta-hydroxyamino acids, producing glycine and aldehydes, via a retro-aldol mechanism. This Synechococcus sp. (strain WH7803) protein is Serine hydroxymethyltransferase.